The sequence spans 180 residues: Acireductone dioxygenase (180 aa).

Histidine 97, histidine 99, glutamate 103, and histidine 141 together coordinate Fe(2+). Ni(2+)-binding residues include histidine 97, histidine 99, glutamate 103, and histidine 141.

This sequence belongs to the acireductone dioxygenase (ARD) family. Monomer. Requires Fe(2+) as cofactor. Ni(2+) is required as a cofactor.

The enzyme catalyses 1,2-dihydroxy-5-(methylsulfanyl)pent-1-en-3-one + O2 = 3-(methylsulfanyl)propanoate + CO + formate + 2 H(+). It carries out the reaction 1,2-dihydroxy-5-(methylsulfanyl)pent-1-en-3-one + O2 = 4-methylsulfanyl-2-oxobutanoate + formate + 2 H(+). It functions in the pathway amino-acid biosynthesis; L-methionine biosynthesis via salvage pathway; L-methionine from S-methyl-5-thio-alpha-D-ribose 1-phosphate: step 5/6. In terms of biological role, catalyzes 2 different reactions between oxygen and the acireductone 1,2-dihydroxy-3-keto-5-methylthiopentene (DHK-MTPene) depending upon the metal bound in the active site. Fe-containing acireductone dioxygenase (Fe-ARD) produces formate and 2-keto-4-methylthiobutyrate (KMTB), the alpha-ketoacid precursor of methionine in the methionine recycle pathway. Ni-containing acireductone dioxygenase (Ni-ARD) produces methylthiopropionate, carbon monoxide and formate, and does not lie on the methionine recycle pathway. This Yersinia pseudotuberculosis serotype O:3 (strain YPIII) protein is Acireductone dioxygenase.